A 134-amino-acid polypeptide reads, in one-letter code: Transcription antitermination protein NusB (134 aa).

Belongs to the NusB family.

Involved in transcription antitermination. Required for transcription of ribosomal RNA (rRNA) genes. Binds specifically to the boxA antiterminator sequence of the ribosomal RNA (rrn) operons. This Shewanella oneidensis (strain ATCC 700550 / JCM 31522 / CIP 106686 / LMG 19005 / NCIMB 14063 / MR-1) protein is Transcription antitermination protein NusB.